The chain runs to 1036 residues: Ephrin type-A receptor 6 (1036 aa).

An N-terminal signal peptide occupies residues 1 to 22 (MGGCEVREFLLQFGFFLPLLTA). Residues 23–550 (WPGDCSHVSN…MAAEQGQILV (528 aa)) are Extracellular-facing. The region spanning 34–212 (QVVLLDTTTV…FYKKCPFTVR (179 aa)) is the Eph LBD domain. Fibronectin type-III domains follow at residues 331 to 441 (PPSA…TDQD) and 442 to 537 (APSL…TGDE). N-linked (GlcNAc...) asparagine glycosylation is found at asparagine 343, asparagine 397, and asparagine 410. Residues 551-571 (IATAAVGGFTLLVILTLFFLI) traverse the membrane as a helical segment. Residues 572 to 1036 (TGRCQWYIKA…MHIQEKGFHV (465 aa)) lie on the Cytoplasmic side of the membrane. Residues tyrosine 606 and tyrosine 612 each carry the phosphotyrosine; by autocatalysis modification. The region spanning 631 to 944 (IRIERVIGAG…RNPSALHTLV (314 aa)) is the Protein kinase domain. ATP contacts are provided by residues 637-645 (IGAGEFGEV) and lysine 663. The active-site Proton acceptor is aspartate 798. Residues tyrosine 831 and tyrosine 978 each carry the phosphotyrosine; by autocatalysis modification. In terms of domain architecture, SAM spans 961–1025 (PLFVTVGDWL…VSSIQTLRLH (65 aa)). Positions 1034 to 1036 (FHV) match the PDZ-binding motif.

Belongs to the protein kinase superfamily. Tyr protein kinase family. Ephrin receptor subfamily. As to quaternary structure, heterotetramer upon binding of the ligand. The heterotetramer is composed of an ephrin dimer and a receptor dimer. Oligomerization is probably required to induce biological responses. Interacts (via SAM domain) with ANKS1A (via SAM domain). Expressed in brain and testis.

It is found in the membrane. The enzyme catalyses L-tyrosyl-[protein] + ATP = O-phospho-L-tyrosyl-[protein] + ADP + H(+). Functionally, receptor tyrosine kinase which binds promiscuously GPI-anchored ephrin-A family ligands residing on adjacent cells, leading to contact-dependent bidirectional signaling into neighboring cells. The signaling pathway downstream of the receptor is referred to as forward signaling while the signaling pathway downstream of the ephrin ligand is referred to as reverse signaling. This is Ephrin type-A receptor 6 (EPHA6) from Homo sapiens (Human).